The sequence spans 161 residues: Copper transporter 1 (161 aa).

2 helical membrane-spanning segments follow: residues 55 to 75 and 109 to 129; these read GGMYALALIFVFALAVIVEFL and VAYLLMLALMSFNGGVFLVAV.

Belongs to the copper transporter (Ctr) (TC 1.A.56) family. SLC31A subfamily. As to quaternary structure, self-interacts. Interacts with SWEET11 and COPT2.

It localises to the cell membrane. Involved in the transport of copper, in cooperation with SWEET11 and COPT2. Contributes to the removal of copper (Cu) from xylem, and thus to the sensitivity toward bacterial pathogens such as X.oryzae pv. oryzae (Xoo). The polypeptide is Copper transporter 1 (COPT1) (Oryza sativa subsp. japonica (Rice)).